A 250-amino-acid chain; its full sequence is Small ribosomal subunit protein uS3 (250 aa).

The KH type-2 domain occupies 39–111; the sequence is IRTLIKNNYP…KVQINIFEVK (73 aa).

This sequence belongs to the universal ribosomal protein uS3 family. Part of the 30S ribosomal subunit. Forms a tight complex with proteins S10 and S14.

Its function is as follows. Binds the lower part of the 30S subunit head. Binds mRNA in the 70S ribosome, positioning it for translation. This Alder yellows phytoplasma protein is Small ribosomal subunit protein uS3.